The primary structure comprises 240 residues: MLLQSQTMGVSHSFTPKGITIPQREKPGHMYQNEDYLQNGLPTETTVLGTVQILCCLLISSLGAILVFAPYPSHFNPAISTTLMSGYPFLGALCFGITGSLSIISGKQSTKPFDLSSLTSNAVSSVTAGAGLFLLADSMVALRTASQHCGSEMDYLSSLPYSEYYYPIYEIKDCLLTSVSLTGVLVVMLIFTVLELLLAAYSSVFWWKQLYSNNPGSSFSSTQSQDHIQQVKKSSSRSWI.

The Cytoplasmic portion of the chain corresponds to 1–47 (MLLQSQTMGVSHSFTPKGITIPQREKPGHMYQNEDYLQNGLPTETTV). A helical membrane pass occupies residues 48 to 68 (LGTVQILCCLLISSLGAILVF). Residues 69-83 (APYPSHFNPAISTTL) are Extracellular-facing. The chain crosses the membrane as a helical span at residues 84 to 104 (MSGYPFLGALCFGITGSLSII). The Cytoplasmic portion of the chain corresponds to 105–121 (SGKQSTKPFDLSSLTSN). Residues 122–142 (AVSSVTAGAGLFLLADSMVAL) form a helical membrane-spanning segment. Over 143-178 (RTASQHCGSEMDYLSSLPYSEYYYPIYEIKDCLLTS) the chain is Extracellular. The helical transmembrane segment at 179-199 (VSLTGVLVVMLIFTVLELLLA) threads the bilayer. The Cytoplasmic segment spans residues 200-240 (AYSSVFWWKQLYSNNPGSSFSSTQSQDHIQQVKKSSSRSWI). The segment at 218–240 (SFSSTQSQDHIQQVKKSSSRSWI) is disordered.

This sequence belongs to the MS4A family. In terms of tissue distribution, ubiquitous expression in normal tissues. Expression is more elevated in adult liver, lung, spleen, and heart than in their fetal counterparts, and is higher in normal tissues than in the cancerous tissue or cell lines. Low levels of expression were detected in the promonocytic stage, whereas high levels of expression were detected in mature monocytes.

The protein resides in the membrane. Its function is as follows. May be involved in signal transduction as a component of a multimeric receptor complex. This Homo sapiens (Human) protein is Membrane-spanning 4-domains subfamily A member 7 (MS4A7).